A 376-amino-acid chain; its full sequence is Multiphosphoryl transfer protein (376 aa).

The 141-residue stretch at 2–142 folds into the PTS EIIA type-2 domain; it reads FQLSVQDIHP…EELRALLMGE (141 aa). Histidine 62 acts as the Tele-phosphohistidine intermediate; for EIIA activity in catalysis. At histidine 62 the chain carries Phosphohistidine; by HPr. Residues 156-284 are m domain; that stretch reads TLDIVASDLL…LTSDDAPTDD (129 aa). The HPr domain occupies 285–375; it reads VLSAEFVVRN…DAIAAGLGEG (91 aa). Histidine 299 functions as the Pros-phosphohistidine intermediate; for HPr activity in the catalytic mechanism. Histidine 299 is modified (phosphohistidine; by EI).

The protein localises to the cytoplasm. Its function is as follows. The phosphoenolpyruvate-dependent sugar phosphotransferase system (sugar PTS), a major carbohydrate active transport system, catalyzes the phosphorylation of incoming sugar substrates concomitantly with their translocation across the cell membrane. The enzyme II FruAB PTS system is involved in fructose transport. The protein is Multiphosphoryl transfer protein of Escherichia coli O157:H7.